The sequence spans 340 residues: Chitinase 7 (340 aa).

The N-terminal stretch at 1 to 32 (MIAARAANLQVAMKALALAVLALAYAAATARA) is a signal peptide. A Chitin-binding type-1 domain is found at 33 to 73 (EQCGRQAGGARCPNRLCCSRWGWCGLTDDYCKGGCQSQCRV). 7 disulfide bridges follow: Cys-35/Cys-50, Cys-44/Cys-56, Cys-49/Cys-63, Cys-67/Cys-71, Cys-118/Cys-173, Cys-185/Cys-193, and Cys-293/Cys-323.

Belongs to the glycosyl hydrolase 19 family. Chitinase class I subfamily. In terms of tissue distribution, expressed in pistils, stamens and lodicules.

It catalyses the reaction Random endo-hydrolysis of N-acetyl-beta-D-glucosaminide (1-&gt;4)-beta-linkages in chitin and chitodextrins.. Hydrolyzes chitin and may play a role in defense against fungal pathogens containing chitin. This Oryza sativa subsp. japonica (Rice) protein is Chitinase 7 (Cht7).